The primary structure comprises 153 residues: 3-hydroxyacyl-[acyl-carrier-protein] dehydratase FabZ (153 aa).

His-52 is an active-site residue.

It belongs to the thioester dehydratase family. FabZ subfamily.

The protein localises to the cytoplasm. It carries out the reaction a (3R)-hydroxyacyl-[ACP] = a (2E)-enoyl-[ACP] + H2O. Functionally, involved in unsaturated fatty acids biosynthesis. Catalyzes the dehydration of short chain beta-hydroxyacyl-ACPs and long chain saturated and unsaturated beta-hydroxyacyl-ACPs. In Magnetococcus marinus (strain ATCC BAA-1437 / JCM 17883 / MC-1), this protein is 3-hydroxyacyl-[acyl-carrier-protein] dehydratase FabZ.